The following is a 518-amino-acid chain: Ankyrin repeat and SOCS box protein 3 (518 aa).

ANK repeat units lie at residues 9 to 38 (DTCS…SVDV), 42 to 71 (RGWM…SENY), 78 to 107 (EGFC…DPNA), 111 to 140 (EETT…NVNG), 145 to 174 (CGWN…NKEC), 178 to 207 (FGIT…NVNC), 211 to 240 (DKAT…DPDL), 246 to 275 (SWQL…RACD), 279 to 308 (NKVS…SPDA), 315 to 346 (GFSS…QINE), and 348 to 373 (HLAY…SLGP). One can recognise an SOCS box domain in the interval 441–504 (MLSARASNAW…HNYLLYEDVL (64 aa)).

Belongs to the ankyrin SOCS box (ASB) family. As to quaternary structure, interacts with ELOB and TNFRSF1B.

It is found in the cytoplasm. It functions in the pathway protein modification; protein ubiquitination. Probable substrate-recognition component of a SCF-like ECS (Elongin-Cullin-SOCS-box protein) E3 ubiquitin-protein ligase complex which mediates the ubiquitination and subsequent proteasomal degradation of target proteins. Recognizes TNFRSF1B. Plays a role in the down-regulation of antiviral innate immunity by targeting MAVS for ubiquitin-proteasomal degradation. Also destabilizes TRAF6 by enhancing its 'Lys-48'-linked polyubiquitination. The chain is Ankyrin repeat and SOCS box protein 3 (ASB3) from Homo sapiens (Human).